The following is a 114-amino-acid chain: Large ribosomal subunit protein uL22c (114 aa).

It belongs to the universal ribosomal protein uL22 family. In terms of assembly, part of the 50S ribosomal subunit.

The protein localises to the plastid. It localises to the cyanelle. Functionally, this protein binds specifically to 23S rRNA. The globular domain of the protein is located near the polypeptide exit tunnel on the outside of the subunit, while an extended beta-hairpin is found that lines the wall of the exit tunnel in the center of the 70S ribosome. This Cyanophora paradoxa protein is Large ribosomal subunit protein uL22c (rpl22).